The sequence spans 410 residues: Serine hydroxymethyltransferase (410 aa).

Residues L116 and 120-122 (GHL) each bind (6S)-5,6,7,8-tetrahydrofolate. K225 is modified (N6-(pyridoxal phosphate)lysine). Residue 349–351 (SPF) coordinates (6S)-5,6,7,8-tetrahydrofolate.

Belongs to the SHMT family. As to quaternary structure, homodimer. Requires pyridoxal 5'-phosphate as cofactor.

The protein localises to the cytoplasm. The catalysed reaction is (6R)-5,10-methylene-5,6,7,8-tetrahydrofolate + glycine + H2O = (6S)-5,6,7,8-tetrahydrofolate + L-serine. Its pathway is one-carbon metabolism; tetrahydrofolate interconversion. The protein operates within amino-acid biosynthesis; glycine biosynthesis; glycine from L-serine: step 1/1. Catalyzes the reversible interconversion of serine and glycine with tetrahydrofolate (THF) serving as the one-carbon carrier. This reaction serves as the major source of one-carbon groups required for the biosynthesis of purines, thymidylate, methionine, and other important biomolecules. Also exhibits THF-independent aldolase activity toward beta-hydroxyamino acids, producing glycine and aldehydes, via a retro-aldol mechanism. This Leuconostoc mesenteroides subsp. mesenteroides (strain ATCC 8293 / DSM 20343 / BCRC 11652 / CCM 1803 / JCM 6124 / NCDO 523 / NBRC 100496 / NCIMB 8023 / NCTC 12954 / NRRL B-1118 / 37Y) protein is Serine hydroxymethyltransferase.